Reading from the N-terminus, the 631-residue chain is Phosphomethylpyrimidine synthase (631 aa).

Residues Asn239, Met268, Tyr297, His333, 353–355, 394–397, and Glu433 each bind substrate; these read SRG and DGLR. His437 is a Zn(2+) binding site. Position 460 (Tyr460) interacts with substrate. His501 contacts Zn(2+). [4Fe-4S] cluster is bound by residues Cys581, Cys584, and Cys589.

The protein belongs to the ThiC family. Homodimer. The cofactor is [4Fe-4S] cluster.

It carries out the reaction 5-amino-1-(5-phospho-beta-D-ribosyl)imidazole + S-adenosyl-L-methionine = 4-amino-2-methyl-5-(phosphooxymethyl)pyrimidine + CO + 5'-deoxyadenosine + formate + L-methionine + 3 H(+). It functions in the pathway cofactor biosynthesis; thiamine diphosphate biosynthesis. In terms of biological role, catalyzes the synthesis of the hydroxymethylpyrimidine phosphate (HMP-P) moiety of thiamine from aminoimidazole ribotide (AIR) in a radical S-adenosyl-L-methionine (SAM)-dependent reaction. In Shigella sonnei (strain Ss046), this protein is Phosphomethylpyrimidine synthase.